The chain runs to 201 residues: 3-isopropylmalate dehydratase small subunit (201 aa).

This sequence belongs to the LeuD family. LeuD type 1 subfamily. Heterodimer of LeuC and LeuD.

It carries out the reaction (2R,3S)-3-isopropylmalate = (2S)-2-isopropylmalate. It functions in the pathway amino-acid biosynthesis; L-leucine biosynthesis; L-leucine from 3-methyl-2-oxobutanoate: step 2/4. In terms of biological role, catalyzes the isomerization between 2-isopropylmalate and 3-isopropylmalate, via the formation of 2-isopropylmaleate. The polypeptide is 3-isopropylmalate dehydratase small subunit (Shigella dysenteriae serotype 1 (strain Sd197)).